Reading from the N-terminus, the 306-residue chain is Armadillo repeat-containing protein 10 (306 aa).

Residues 7 to 29 traverse the membrane as a helical segment; sequence VGWVAAGLVLGAGACYCIYRLTR. Position 43 is a phosphoserine (Ser-43). Thr-48 carries the post-translational modification Phosphothreonine. Residues 101-143 form an ARM repeat; that stretch reads GGIPIVGSKINSLNQSIKEKALNALNNLSVNVENQTKIKIYVR.

As to quaternary structure, interacts with the DNA-binding domain of p53/TP53.

The protein localises to the endoplasmic reticulum membrane. It localises to the mitochondrion outer membrane. Its function is as follows. May play a role in cell survival and cell growth. May suppress the transcriptional activity of p53/TP53. This is Armadillo repeat-containing protein 10 (Armc10) from Rattus norvegicus (Rat).